Consider the following 35-residue polypeptide: Photosystem II reaction center protein T (35 aa).

A helical membrane pass occupies residues 3–23 (ALVYTFLLVSTLGIIFFAIFF).

This sequence belongs to the PsbT family. In terms of assembly, PSII is composed of 1 copy each of membrane proteins PsbA, PsbB, PsbC, PsbD, PsbE, PsbF, PsbH, PsbI, PsbJ, PsbK, PsbL, PsbM, PsbT, PsbY, PsbZ, Psb30/Ycf12, at least 3 peripheral proteins of the oxygen-evolving complex and a large number of cofactors. It forms dimeric complexes.

The protein resides in the plastid. Its subcellular location is the chloroplast thylakoid membrane. Its function is as follows. Found at the monomer-monomer interface of the photosystem II (PS II) dimer, plays a role in assembly and dimerization of PSII. PSII is a light-driven water plastoquinone oxidoreductase, using light energy to abstract electrons from H(2)O, generating a proton gradient subsequently used for ATP formation. In Gossypium barbadense (Sea Island cotton), this protein is Photosystem II reaction center protein T.